The following is an 82-amino-acid chain: Small ribosomal subunit protein bS18A (82 aa).

Belongs to the bacterial ribosomal protein bS18 family. As to quaternary structure, part of the 30S ribosomal subunit. Forms a tight heterodimer with protein bS6.

Its function is as follows. Binds as a heterodimer with protein bS6 to the central domain of the 16S rRNA, where it helps stabilize the platform of the 30S subunit. The protein is Small ribosomal subunit protein bS18A of Streptomyces griseus subsp. griseus (strain JCM 4626 / CBS 651.72 / NBRC 13350 / KCC S-0626 / ISP 5235).